The following is a 1353-amino-acid chain: Adenylate cyclase type 9 (1353 aa).

Disordered regions lie at residues 1-27 (MASP…DSNS) and 49-71 (SISS…GGGG). Topologically, residues 1–117 (MASPPHQQLL…CFPQTQRRFR (117 aa)) are cytoplasmic. Residues 16 to 27 (EVSCDSSGDSNS) are compositionally biased toward polar residues. Residues 49–66 (SISSSCSSSGDSGGVPRR) show a composition bias toward low complexity. Residues 118–138 (YALFYIGFACLLWSIYFAVHM) traverse the membrane as a helical segment. The Extracellular segment spans residues 139-141 (RSR). The helical transmembrane segment at 142–162 (LIVMVAPALCFLLVCVGFFLF) threads the bilayer. At 163 to 171 (TFTKLYARH) the chain is on the cytoplasmic side. The helical transmembrane segment at 172–192 (YAWTSLALTLLVFALTLAAQF) threads the bilayer. Residues 193–215 (QVLTPVSGRGDSSNLTATARPTD) are Extracellular-facing. Asn-206 carries an N-linked (GlcNAc...) asparagine glycan. A helical membrane pass occupies residues 216–235 (TCLSQVGSFSMCIEVLFLLY). The Cytoplasmic segment spans residues 236-241 (TVMHLP). A helical transmembrane segment spans residues 242–259 (LYLSLCLGVAYSVLFETF). Residues 260–280 (GYHFRDEACFPSPGAGALHWE) lie on the Extracellular side of the membrane. Residues 281–301 (LLSRGLLHGCIHAIGVHLFVM) form a helical membrane-spanning segment. Residues 302–786 (SQVRSRSTFL…VKTFASPTFS (485 aa)) are Cytoplasmic-facing. The segment at 349–375 (QGDEESENSVKRHATSSPKNRKKKSSI) is disordered. The span at 359-374 (KRHATSSPKNRKKKSS) shows a compositional bias: basic residues. A Guanylate cyclase 1 domain is found at 394-521 (SILFADIVGF…NDVNLANLME (128 aa)). Asp-399, Ile-400, and Asp-443 together coordinate Mg(2+). ATP is bound by residues 399–404 (DIVGFT), 441–443 (LGD), and Arg-487. Ser-610 carries the post-translational modification Phosphoserine. Positions 642-684 (EAGAEGGAPQNGCQDEHKNSTKASGGPNPKTQNGLLSPPQEEK) are disordered. A phosphoserine mark is found at Ser-688, Ser-691, and Ser-706. The chain crosses the membrane as a helical span at residues 787 to 807 (SLLDVFLSTTVFLTLSTTCFL). The Extracellular portion of the chain corresponds to 808 to 818 (KYEAATVPPPP). Residues 819–839 (AALAVFSAALLLEVLSLAVSI) traverse the membrane as a helical segment. Residues 840–867 (RMVFFLEDVMACTKRLLEWIAGWLPRHC) lie on the Cytoplasmic side of the membrane. The helical transmembrane segment at 868–888 (IGAILVSLPALAVYSHVTSEY) threads the bilayer. Topologically, residues 889–891 (ETN) are extracellular. Residues 892–912 (IHFPVFTGSAALIAVVHYCNF) traverse the membrane as a helical segment. The Cytoplasmic segment spans residues 913–920 (CQLSSWMR). The helical transmembrane segment at 921–941 (SSLATVVGAGPLLLLYVSLCP) threads the bilayer. Residues 942 to 975 (DSSVLTSPLDAVQNFSSERNPCNSSVPRDLRRPA) lie on the Extracellular side of the membrane. Residues Asn-955 and Asn-964 are each glycosylated (N-linked (GlcNAc...) asparagine). The helical transmembrane segment at 976–996 (SLIGQEVVLVFFLLLLLVWFL) threads the bilayer. The Cytoplasmic segment spans residues 997–1353 (NREFEVSYRL…LTKLNVSKSV (357 aa)). A Guanylate cyclase 2 domain is found at 1058–1198 (GVIFASIVNF…DTVNIASRMD (141 aa)). Residues Lys-1108, 1185–1187 (DIW), 1192–1196 (NIASR), and Lys-1232 each bind ATP. Ser-1257, Ser-1259, Ser-1295, and Ser-1307 each carry phosphoserine. Residues 1292–1301 (SLGSDSSTQA) show a composition bias toward polar residues. A disordered region spans residues 1292 to 1326 (SLGSDSSTQAKDAHLSPKRPWKEPVKAEERGRFGK). Positions 1302–1326 (KDAHLSPKRPWKEPVKAEERGRFGK) are enriched in basic and acidic residues.

The protein belongs to the adenylyl cyclase class-4/guanylyl cyclase family. Requires Mg(2+) as cofactor. The cofactor is Mn(2+). Detected in skeletal muscle, pancreas, lung, heart, kidney, liver, brain and placenta. Expressed in multiple cells of the lung, with expression highest in airway smooth muscle.

It is found in the cell membrane. It catalyses the reaction ATP = 3',5'-cyclic AMP + diphosphate. Its activity is regulated as follows. Insensitive to calcium/calmodulin, forskolin and somatostatin. Stimulated by beta-adrenergic receptor activation. Activity is down-regulated by calcium/calcineurin. Its function is as follows. Adenylyl cyclase that catalyzes the formation of the signaling molecule cAMP in response to activation of G protein-coupled receptors. Contributes to signaling cascades activated by CRH (corticotropin-releasing factor), corticosteroids and beta-adrenergic receptors. This is Adenylate cyclase type 9 (ADCY9) from Homo sapiens (Human).